A 716-amino-acid polypeptide reads, in one-letter code: 1,4-alpha-glucan branching enzyme GlgB (716 aa).

The active-site Nucleophile is the Asp-394. Glu-447 (proton donor) is an active-site residue.

It belongs to the glycosyl hydrolase 13 family. GlgB subfamily. In terms of assembly, monomer.

It catalyses the reaction Transfers a segment of a (1-&gt;4)-alpha-D-glucan chain to a primary hydroxy group in a similar glucan chain.. It functions in the pathway glycan biosynthesis; glycogen biosynthesis. Functionally, catalyzes the formation of the alpha-1,6-glucosidic linkages in glycogen by scission of a 1,4-alpha-linked oligosaccharide from growing alpha-1,4-glucan chains and the subsequent attachment of the oligosaccharide to the alpha-1,6 position. This Photobacterium profundum (strain SS9) protein is 1,4-alpha-glucan branching enzyme GlgB.